Consider the following 619-residue polypeptide: Schlafen family member 12-like (619 aa).

The chain crosses the membrane as a helical span at residues 598–618 (IFLFVCLFRFCLFVCLFVFFL).

The protein belongs to the Schlafen family.

The protein localises to the membrane. In Pongo abelii (Sumatran orangutan), this protein is Schlafen family member 12-like (SLFN12L).